The chain runs to 409 residues: UDP-N-acetylglucosamine--N-acetylmuramyl-(pentapeptide) pyrophosphoryl-undecaprenol N-acetylglucosamine transferase (409 aa).

UDP-N-acetyl-alpha-D-glucosamine is bound by residues 11–13 (TGG), N125, R169, S199, and Q299.

Belongs to the glycosyltransferase 28 family. MurG subfamily.

The protein localises to the cell membrane. The enzyme catalyses di-trans,octa-cis-undecaprenyl diphospho-N-acetyl-alpha-D-muramoyl-L-alanyl-D-glutamyl-meso-2,6-diaminopimeloyl-D-alanyl-D-alanine + UDP-N-acetyl-alpha-D-glucosamine = di-trans,octa-cis-undecaprenyl diphospho-[N-acetyl-alpha-D-glucosaminyl-(1-&gt;4)]-N-acetyl-alpha-D-muramoyl-L-alanyl-D-glutamyl-meso-2,6-diaminopimeloyl-D-alanyl-D-alanine + UDP + H(+). It participates in cell wall biogenesis; peptidoglycan biosynthesis. In terms of biological role, cell wall formation. Catalyzes the transfer of a GlcNAc subunit on undecaprenyl-pyrophosphoryl-MurNAc-pentapeptide (lipid intermediate I) to form undecaprenyl-pyrophosphoryl-MurNAc-(pentapeptide)GlcNAc (lipid intermediate II). This Clostridioides difficile (strain 630) (Peptoclostridium difficile) protein is UDP-N-acetylglucosamine--N-acetylmuramyl-(pentapeptide) pyrophosphoryl-undecaprenol N-acetylglucosamine transferase.